The sequence spans 427 residues: Serine--tRNA ligase (427 aa).

231–233 (TAE) is an L-serine binding site. 262 to 264 (RSE) provides a ligand contact to ATP. Residue glutamate 285 coordinates L-serine. 349 to 352 (EISS) lines the ATP pocket. L-serine is bound at residue serine 385.

Belongs to the class-II aminoacyl-tRNA synthetase family. Type-1 seryl-tRNA synthetase subfamily. In terms of assembly, homodimer. The tRNA molecule binds across the dimer.

It is found in the cytoplasm. It carries out the reaction tRNA(Ser) + L-serine + ATP = L-seryl-tRNA(Ser) + AMP + diphosphate + H(+). The catalysed reaction is tRNA(Sec) + L-serine + ATP = L-seryl-tRNA(Sec) + AMP + diphosphate + H(+). The protein operates within aminoacyl-tRNA biosynthesis; selenocysteinyl-tRNA(Sec) biosynthesis; L-seryl-tRNA(Sec) from L-serine and tRNA(Sec): step 1/1. Its function is as follows. Catalyzes the attachment of serine to tRNA(Ser). Is also able to aminoacylate tRNA(Sec) with serine, to form the misacylated tRNA L-seryl-tRNA(Sec), which will be further converted into selenocysteinyl-tRNA(Sec). The polypeptide is Serine--tRNA ligase (Brucella melitensis biotype 2 (strain ATCC 23457)).